Here is a 95-residue protein sequence, read N- to C-terminus: Large ribosomal subunit protein bL25 (95 aa).

The protein belongs to the bacterial ribosomal protein bL25 family. Part of the 50S ribosomal subunit; part of the 5S rRNA/L5/L18/L25 subcomplex. Contacts the 5S rRNA. Binds to the 5S rRNA independently of L5 and L18.

In terms of biological role, this is one of the proteins that binds to the 5S RNA in the ribosome where it forms part of the central protuberance. The protein is Large ribosomal subunit protein bL25 of Shewanella baltica (strain OS223).